The primary structure comprises 104 residues: Replication restart protein PriB (104 aa).

The 101-residue stretch at 1–101 (MTNRLELSGV…LHADHIEIIC (101 aa)) folds into the SSB domain.

Belongs to the PriB family. In terms of assembly, homodimer. Interacts with PriA and DnaT. Component of the replication restart primosome. Primosome assembly occurs via a 'hand-off' mechanism. PriA binds to replication forks, subsequently PriB then DnaT bind; DnaT then displaces ssDNA to generate the helicase loading substrate.

Involved in the restart of stalled replication forks, which reloads the replicative helicase on sites other than the origin of replication; the PriA-PriB pathway is the major replication restart pathway. During primosome assembly it facilitates complex formation between PriA and DnaT on DNA; stabilizes PriA on DNA. Stimulates the DNA unwinding activity of PriA helicase. The sequence is that of Replication restart protein PriB from Photobacterium profundum (strain SS9).